Here is a 280-residue protein sequence, read N- to C-terminus: Type 1 encapsulin shell protein (280 aa).

The protein belongs to the encapsulin family. Family 1 subfamily. This encapsulin nanocompartment is formed by 60 subunits; monomers form pentamers which assemble to form shells. There are 12 pores where the pentamers meet as well as 3-fold axis channels and dimer channels; none are larger than 3-4 Angstroms in diameter. The N-terminus of the protein is inside the shell, the C-terminus is outside.

It is found in the encapsulin nanocompartment. Its function is as follows. Shell component of a type 1 encapsulin nanocompartment. Assembles into proteinaceous icosahedral shells 24 nm in diameter in the presence and absence of its ferritin cargo protein. The center of cargo-loaded nanocompartments is loaded with iron. The empty encapsulin nanocompartment sequesters about 2200 Fe ions while the cargo-loaded nanocompartment can maximally sequester about 4150 Fe ions. Does not have any detectable ferroxidase activity. The protein is Type 1 encapsulin shell protein of Rhodospirillum rubrum (strain ATCC 11170 / ATH 1.1.1 / DSM 467 / LMG 4362 / NCIMB 8255 / S1).